The sequence spans 151 residues: Large ribosomal subunit protein bL9 (151 aa).

It belongs to the bacterial ribosomal protein bL9 family.

Functionally, binds to the 23S rRNA. The polypeptide is Large ribosomal subunit protein bL9 (Dehalococcoides mccartyi (strain ATCC BAA-2100 / JCM 16839 / KCTC 5957 / BAV1)).